The sequence spans 333 residues: Ig gamma-2B chain C region (333 aa).

Ig-like domains are found at residues 6 to 96 (PSVY…KKVE), 124 to 223 (PSVF…KTIS), and 232 to 328 (PQVY…KSIS). Intrachain disulfides connect Cys27/Cys80, Cys147/Cys207, and Cys253/Cys311.

This chain is Ig gamma-2B chain C region (Igh-1a), found in Rattus norvegicus (Rat).